The following is a 241-amino-acid chain: tRNA pseudouridine synthase A (241 aa).

The active-site Nucleophile is aspartate 52. Tyrosine 111 is a substrate binding site.

It belongs to the tRNA pseudouridine synthase TruA family. In terms of assembly, homodimer.

The enzyme catalyses uridine(38/39/40) in tRNA = pseudouridine(38/39/40) in tRNA. Functionally, formation of pseudouridine at positions 38, 39 and 40 in the anticodon stem and loop of transfer RNAs. The sequence is that of tRNA pseudouridine synthase A from Ureaplasma urealyticum serovar 10 (strain ATCC 33699 / Western).